We begin with the raw amino-acid sequence, 565 residues long: Wee1-like protein kinase 2 (565 aa).

2 stretches are compositionally biased toward basic and acidic residues: residues 1–12 and 26–52; these read MGDNGDNKELKQ and EGQKEAQESKKVQYHTPERCGHQDSEA. Disordered stretches follow at residues 1 to 142 and 169 to 189; these read MGDN…TPGP and KSNGKRKTRRDLEEAGPEEGK. Ser77 bears the Phosphoserine mark. The Nuclear localization signal signature appears at 173 to 175; sequence KRK. Over residues 178-189 the composition is skewed to basic and acidic residues; the sequence is RDLEEAGPEEGK. The region spanning 214-492 is the Protein kinase domain; sequence FLEVEKIGVG…TRSRVLCPSL (279 aa). Residues 220 to 228 and Lys243 contribute to the ATP site; that span reads IGVGEFGTV. A Nuclear export signal motif is present at residues 317 to 331; that stretch reads KLKDILLQISLGLKY. Catalysis depends on Asp341, which acts as the Proton acceptor. 2 residues coordinate Mg(2+): Asn346 and Asp382. Positions 495–521 form a coiled coil; it reads TEELQQQLNLEKFKTATLERELKEVQR. The disordered stretch occupies residues 518 to 565; that stretch reads EVQRAQSSKEGQSSPGVTGTHTGSRSTRRLVGGKSAKSSSFTWGQSSP. Composition is skewed to polar residues over residues 521 to 534 and 553 to 565; these read RAQSSKEGQSSPGV and AKSSSFTWGQSSP.

This sequence belongs to the protein kinase superfamily. Ser/Thr protein kinase family. WEE1 subfamily. Post-translationally, phosphorylation leads to increase its activity. Ovary-specific.

The protein resides in the nucleus. It carries out the reaction L-tyrosyl-[protein] + ATP = O-phospho-L-tyrosyl-[protein] + ADP + H(+). Its function is as follows. Oocyte-specific protein tyrosine kinase that phosphorylates and inhibits CDK1 and acts as a key regulator of meiosis during both prophase I and metaphase II. Required to maintain meiotic arrest in oocytes during the germinal vesicle (GV) stage, a long period of quiescence at dictyate prophase I, by phosphorylating CDK1 at 'Tyr-15', leading to inhibit CDK1 activity and prevent meiotic reentry. Also required for metaphase II exit during egg activation by phosphorylating CDK1 at 'Tyr-15', to ensure exit from meiosis in oocytes and promote pronuclear formation. The chain is Wee1-like protein kinase 2 (WEE2) from Sus scrofa (Pig).